The following is a 28-amino-acid chain: C-hordein (28 aa).

Residues 1 to 28 (RQLNPSSQELQSPQQSYLQQPYPQNPYL) are disordered.

As to expression, developing endosperm.

Sulfur-poor seed storage protein. The sequence is that of C-hordein from Hordeum vulgare subsp. spontaneum (Wild barley).